The chain runs to 345 residues: Src kinase-associated phosphoprotein 1 (345 aa).

The 104-residue stretch at 109 to 212 (KIFKQGYLER…WVEQIQFLVK (104 aa)) folds into the PH domain. Residues 226–274 (ETYDDIESTESSPVVGLTNDSENSLQEDDVYESIPGDEETEESEDENYE) are disordered. Over residues 250-272 (LQEDDVYESIPGDEETEESEDEN) the composition is skewed to acidic residues. Residues 283–344 (FYGDYYQGLW…PKDYLTLAFD (62 aa)) form the SH3 domain.

Belongs to the SKAP family. As to quaternary structure, homodimer. In terms of processing, phosphorylated on tyrosines.

Its subcellular location is the cytoplasm. The protein resides in the nucleus. It is found in the cell membrane. Its function is as follows. Positively regulates T-cell receptor signaling. Required for optimal conjugation between T-cells and antigen-presenting cells. This is Src kinase-associated phosphoprotein 1 (skap1) from Xenopus tropicalis (Western clawed frog).